We begin with the raw amino-acid sequence, 386 residues long: Succinate--CoA ligase [ADP-forming] subunit beta (386 aa).

The region spanning 9–244 (KEILRKYGVP…HDEEDPLETR (236 aa)) is the ATP-grasp domain. ATP is bound by residues Lys-46, 53 to 55 (GRG), Glu-99, Cys-102, and Glu-107. Mg(2+) is bound by residues Asn-199 and Asp-213. Substrate-binding positions include Asn-264 and 321–323 (GIM).

Belongs to the succinate/malate CoA ligase beta subunit family. As to quaternary structure, heterotetramer of two alpha and two beta subunits. It depends on Mg(2+) as a cofactor.

It carries out the reaction succinate + ATP + CoA = succinyl-CoA + ADP + phosphate. It catalyses the reaction GTP + succinate + CoA = succinyl-CoA + GDP + phosphate. The protein operates within carbohydrate metabolism; tricarboxylic acid cycle; succinate from succinyl-CoA (ligase route): step 1/1. Functionally, succinyl-CoA synthetase functions in the citric acid cycle (TCA), coupling the hydrolysis of succinyl-CoA to the synthesis of either ATP or GTP and thus represents the only step of substrate-level phosphorylation in the TCA. The beta subunit provides nucleotide specificity of the enzyme and binds the substrate succinate, while the binding sites for coenzyme A and phosphate are found in the alpha subunit. The protein is Succinate--CoA ligase [ADP-forming] subunit beta of Rickettsia prowazekii (strain Madrid E).